We begin with the raw amino-acid sequence, 236 residues long: MINFGSCWGLASVTSNSFSIISGFSSNSVSHAHDMGLVPDLPPTVAAIKNPTSKIVYDEHNHERYPPGDPSKRAFAYFVLTGGRFVYASLVRLLILKFVLSMSASKDVLALASLEVDLSSIEPGTTVTVKWRGKPVFIRRRTEDDINLANSVDLGSLRDPQQDAERVKSPEWLVVIGVCTHLGCIPLPNAGDFGGWFCPCHGSHYDISGRIRKGPAPYNLEVPTYSFLEENKLLIG.

A mitochondrion-targeting transit peptide spans 1-24; that stretch reads MINFGSCWGLASVTSNSFSIISGF. At 25–73 the chain is on the mitochondrial matrix side; the sequence is SSNSVSHAHDMGLVPDLPPTVAAIKNPTSKIVYDEHNHERYPPGDPSKR. The helical transmembrane segment at 74–96 threads the bilayer; sequence AFAYFVLTGGRFVYASLVRLLIL. At 97–236 the chain is on the mitochondrial intermembrane side; the sequence is KFVLSMSASK…FLEENKLLIG (140 aa). The Rieske domain maps to 146–234; it reads INLANSVDLG…YSFLEENKLL (89 aa). Residues Cys179, His181, Cys198, and His201 each contribute to the [2Fe-2S] cluster site. Cys184 and Cys200 form a disulfide bridge.

The protein belongs to the Rieske iron-sulfur protein family. As to quaternary structure, component of the ubiquinol-cytochrome c oxidoreductase (cytochrome b-c1 complex, complex III, CIII), a multisubunit enzyme composed of 3 respiratory subunits cytochrome b, cytochrome c1 and Rieske protein, 2 core protein subunits, and several low-molecular weight protein subunits. The complex exists as an obligatory dimer and forms supercomplexes (SCs) in the inner mitochondrial membrane with cytochrome c oxidase (complex IV, CIV). It depends on [2Fe-2S] cluster as a cofactor.

The protein resides in the mitochondrion inner membrane. The enzyme catalyses a quinol + 2 Fe(III)-[cytochrome c](out) = a quinone + 2 Fe(II)-[cytochrome c](out) + 2 H(+)(out). Functionally, component of the ubiquinol-cytochrome c oxidoreductase, a multisubunit transmembrane complex that is part of the mitochondrial electron transport chain which drives oxidative phosphorylation. The respiratory chain contains 3 multisubunit complexes succinate dehydrogenase (complex II, CII), ubiquinol-cytochrome c oxidoreductase (cytochrome b-c1 complex, complex III, CIII) and cytochrome c oxidase (complex IV, CIV), that cooperate to transfer electrons derived from NADH and succinate to molecular oxygen, creating an electrochemical gradient over the inner membrane that drives transmembrane transport and the ATP synthase. The cytochrome b-c1 complex catalyzes electron transfer from ubiquinol to cytochrome c, linking this redox reaction to translocation of protons across the mitochondrial inner membrane, with protons being carried across the membrane as hydrogens on the quinol. In the process called Q cycle, 2 protons are consumed from the matrix, 4 protons are released into the intermembrane space and 2 electrons are passed to cytochrome c. The Rieske protein is a catalytic core subunit containing a [2Fe-2S] iron-sulfur cluster. It cycles between 2 conformational states during catalysis to transfer electrons from the quinol bound in the Q(0) site in cytochrome b to cytochrome c1. The protein is Cytochrome b-c1 complex subunit Rieske-4, mitochondrial of Nicotiana tabacum (Common tobacco).